A 634-amino-acid polypeptide reads, in one-letter code: uncharacterized protein (634 aa).

Residues 1-40 (MWLQQRLKGLPGLLSSSWARRLLCLLGLLLLLLWFGGSGA) form the signal peptide. Topologically, residues 41-589 (RRAAGGLHLL…DEHMAQQDPG (549 aa)) are extracellular. N-linked (GlcNAc...) asparagine glycosylation occurs at N363. The helical transmembrane segment at 590-610 (LPFLFWFSVASLITLFHLFLF) threads the bilayer. The Cytoplasmic segment spans residues 611–634 (KLIYNEYCGPGAKPLFRSKEDPSV).

It is found in the membrane. This is an uncharacterized protein from Homo sapiens (Human).